We begin with the raw amino-acid sequence, 506 residues long: Histidine ammonia-lyase (506 aa).

The segment at residues A143–G145 is a cross-link (5-imidazolinone (Ala-Gly)). A 2,3-didehydroalanine (Ser) modification is found at S144.

The protein belongs to the PAL/histidase family. Post-translationally, contains an active site 4-methylidene-imidazol-5-one (MIO), which is formed autocatalytically by cyclization and dehydration of residues Ala-Ser-Gly.

It localises to the cytoplasm. The catalysed reaction is L-histidine = trans-urocanate + NH4(+). It functions in the pathway amino-acid degradation; L-histidine degradation into L-glutamate; N-formimidoyl-L-glutamate from L-histidine: step 1/3. This Salmonella choleraesuis (strain SC-B67) protein is Histidine ammonia-lyase.